The following is a 211-amino-acid chain: Thymidylate kinase (211 aa).

11 to 18 (GPDGAGKT) lines the ATP pocket.

It belongs to the thymidylate kinase family.

It carries out the reaction dTMP + ATP = dTDP + ADP. In terms of biological role, phosphorylation of dTMP to form dTDP in both de novo and salvage pathways of dTTP synthesis. The protein is Thymidylate kinase of Streptococcus equi subsp. zooepidemicus (strain H70).